A 106-amino-acid polypeptide reads, in one-letter code: Urease subunit beta (106 aa).

It belongs to the urease beta subunit family. Heterotrimer of UreA (gamma), UreB (beta) and UreC (alpha) subunits. Three heterotrimers associate to form the active enzyme.

Its subcellular location is the cytoplasm. The catalysed reaction is urea + 2 H2O + H(+) = hydrogencarbonate + 2 NH4(+). The protein operates within nitrogen metabolism; urea degradation; CO(2) and NH(3) from urea (urease route): step 1/1. The protein is Urease subunit beta of Prochlorococcus marinus (strain MIT 9312).